The sequence spans 102 residues: Large ribosomal subunit protein bL21 (102 aa).

Belongs to the bacterial ribosomal protein bL21 family. As to quaternary structure, part of the 50S ribosomal subunit. Contacts protein L20.

In terms of biological role, this protein binds to 23S rRNA in the presence of protein L20. The sequence is that of Large ribosomal subunit protein bL21 from Bifidobacterium longum subsp. infantis (strain ATCC 15697 / DSM 20088 / JCM 1222 / NCTC 11817 / S12).